The chain runs to 1256 residues: Topoisomerase 1-associated factor 1 (1256 aa).

Acidic residues predominate over residues 26-38 (GFIVSDEENDNLE). 4 disordered regions span residues 26–58 (GFIV…VDEY), 695–725 (SKKK…RTHA), 1052–1121 (SGAE…EAFF), and 1176–1256 (SDGV…DEDE). Residues 39–53 (NENRNERDPDSRNQD) show a composition bias toward basic and acidic residues. The segment covering 1060-1086 (GKARKRGNKSSSTIKKKSLQSRSRRPP) has biased composition (basic residues). 2 stretches are compositionally biased toward basic and acidic residues: residues 1097-1110 (ELRK…FVHD) and 1179-1190 (VDTHSHQDDKSQ). Over residues 1194-1204 (SENEDSSEEVS) the composition is skewed to acidic residues. The segment covering 1222–1231 (DNNVSENYVS) has biased composition (low complexity).

Belongs to the timeless family. In terms of assembly, component of the fork protection complex (FPC) consisting of TOF1 and CSM3.

Its subcellular location is the nucleus. Its function is as follows. Forms a fork protection complex (FPC) with CSM3 and which is required for chromosome segregation during meiosis and DNA damage repair. FPC coordinates leading and lagging strand synthesis and moves with the replication fork. FPC stabilizes replication forks in a configuration that is recognized by replication checkpoint sensors. The polypeptide is Topoisomerase 1-associated factor 1 (TOF1) (Scheffersomyces stipitis (strain ATCC 58785 / CBS 6054 / NBRC 10063 / NRRL Y-11545) (Yeast)).